The primary structure comprises 267 residues: tRNA-cytidine(32) 2-sulfurtransferase (267 aa).

Positions 37-42 match the PP-loop motif motif; that stretch reads SGGKDS. The [4Fe-4S] cluster site is built by Cys112, Cys115, and Cys203.

The protein belongs to the TtcA family. Homodimer. Requires Mg(2+) as cofactor. [4Fe-4S] cluster is required as a cofactor.

It is found in the cytoplasm. The catalysed reaction is cytidine(32) in tRNA + S-sulfanyl-L-cysteinyl-[cysteine desulfurase] + AH2 + ATP = 2-thiocytidine(32) in tRNA + L-cysteinyl-[cysteine desulfurase] + A + AMP + diphosphate + H(+). Its pathway is tRNA modification. Catalyzes the ATP-dependent 2-thiolation of cytidine in position 32 of tRNA, to form 2-thiocytidine (s(2)C32). The sulfur atoms are provided by the cysteine/cysteine desulfurase (IscS) system. This is tRNA-cytidine(32) 2-sulfurtransferase from Dichelobacter nodosus (strain VCS1703A).